We begin with the raw amino-acid sequence, 466 residues long: Clusterin-like protein 1 (466 aa).

An N-terminal signal peptide occupies residues 1-20 (MKPPLLVFIVCLLWLKDSHC). Residues 57 to 111 (KQMKIMMERKEKEHTNLMSTLKKCREEKQEALKLLNEVQEHLEEEERLCRESLAD) adopt a coiled-coil conformation. 5 disulfide bridges follow: cysteine 105–cysteine 333, cysteine 116–cysteine 325, cysteine 119–cysteine 322, cysteine 124–cysteine 315, and cysteine 131–cysteine 305. 6 N-linked (GlcNAc...) asparagine glycosylation sites follow: asparagine 196, asparagine 257, asparagine 311, asparagine 351, asparagine 412, and asparagine 431.

It belongs to the clusterin family.

It is found in the secreted. In Homo sapiens (Human), this protein is Clusterin-like protein 1 (CLUL1).